The sequence spans 321 residues: NADPH-dependent codeinone reductase 1-1 (321 aa).

NADPH is bound by residues threonine 27 and aspartate 51. Active-site proton donor residues include tyrosine 56 and histidine 119. Substrate is bound at residue histidine 119. Residues glutamine 187, serine 214, leucine 216, serine 264, and arginine 269 each coordinate NADPH.

The protein belongs to the aldo/keto reductase family. As to expression, latex secreting cells (laticifer cells). Expressed constitutively and ubiquitously with highest levels in capsules. Restricted to the parietal region of sieve elements adjacent or proximal to laticifers in roots, stems, leaves and carpels.

The protein localises to the cytoplasm. It is found in the cytosol. It carries out the reaction codeine + NADP(+) = codeinone + NADPH + H(+). It catalyses the reaction neopine + NADP(+) = neopinone + NADPH + H(+). The enzyme catalyses morphine + NADP(+) = morphinone + NADPH + H(+). The catalysed reaction is neomorphine + NADP(+) = neomorphinone + NADPH + H(+). The protein operates within alkaloid biosynthesis; morphine biosynthesis. Functionally, NADPH-dependent reductase involved in biosynthesis of morphinan-type benzylisoquinoline and opiate alkaloids natural products. Reduces codeinone to codeine in the penultimate step in morphine biosynthesis. Can use morphinone, hydrocodone and hydromorphone as substrate during reductive reaction with NADPH as cofactor, and morphine and dihydrocodeine as substrate during oxidative reaction with NADP as cofactor. Converts morphinone to morphine, and neomorphinone to neomorphine. Reduces irreversibly neopinone, a spontaneous isomer of codeinone, to neopine; in planta, neopine levels are limited to low levels. The protein is NADPH-dependent codeinone reductase 1-1 of Papaver somniferum (Opium poppy).